The primary structure comprises 146 residues: Hemoglobin subunit beta (146 aa).

Val1 carries the N-acetylvaline modification. The region spanning 2–146 is the Globin domain; the sequence is ELTAEEKAAV…VANALAHKYH (145 aa). Ser44 carries the post-translational modification Phosphoserine. Lys59 bears the N6-acetyllysine mark. His63 contacts heme b. Lys82 bears the N6-acetyllysine mark. Position 92 (His92) interacts with heme b. Cys93 is subject to S-nitrosocysteine. The residue at position 144 (Lys144) is an N6-acetyllysine.

The protein belongs to the globin family. In terms of assembly, heterotetramer of two alpha chains and two beta chains. In terms of tissue distribution, red blood cells.

Involved in oxygen transport from the lung to the various peripheral tissues. This Ceratotherium simum (White rhinoceros) protein is Hemoglobin subunit beta (HBB).